The chain runs to 126 residues: Ribosome-binding factor A (126 aa).

Belongs to the RbfA family. Monomer. Binds 30S ribosomal subunits, but not 50S ribosomal subunits or 70S ribosomes.

It is found in the cytoplasm. In terms of biological role, one of several proteins that assist in the late maturation steps of the functional core of the 30S ribosomal subunit. Associates with free 30S ribosomal subunits (but not with 30S subunits that are part of 70S ribosomes or polysomes). Required for efficient processing of 16S rRNA. May interact with the 5'-terminal helix region of 16S rRNA. The protein is Ribosome-binding factor A of Azoarcus sp. (strain BH72).